The primary structure comprises 922 residues: Probable dipeptidyl-aminopeptidase B (922 aa).

Over residues 1–16 (MATEKGHSRDDEERVP) the composition is skewed to basic and acidic residues. The segment at 1 to 21 (MATEKGHSRDDEERVPLTRGS) is disordered. The Cytoplasmic portion of the chain corresponds to 1–99 (MATEKGHSRD…KPMHKSVKIA (99 aa)). The chain crosses the membrane as a helical; Signal-anchor for type II membrane protein span at residues 100–120 (LWSLLFLSLGGWSLAFVLFIF). Over 121-922 (RSHDTYQTPI…AGLYKFKHLC (802 aa)) the chain is Vacuolar. 4 N-linked (GlcNAc...) asparagine glycosylation sites follow: N135, N200, N351, and N574. S756 serves as the catalytic Charge relay system. N815 carries N-linked (GlcNAc...) asparagine glycosylation. Catalysis depends on charge relay system residues D833 and H866. N902 carries an N-linked (GlcNAc...) asparagine glycan.

Belongs to the peptidase S9B family.

The protein resides in the vacuole membrane. It carries out the reaction Release of an N-terminal dipeptide, Xaa-Yaa-|-Zaa-, from a polypeptide, preferentially when Yaa is Pro, provided Zaa is neither Pro nor hydroxyproline.. In terms of biological role, type IV dipeptidyl-peptidase which removes N-terminal dipeptides sequentially from polypeptides having unsubstituted N-termini provided that the penultimate residue is proline. The protein is Probable dipeptidyl-aminopeptidase B (DAPB) of Ajellomyces capsulatus (strain NAm1 / WU24) (Darling's disease fungus).